The following is a 502-amino-acid chain: Glycerate kinase (502 aa).

This sequence belongs to the glycerate kinase type-2 family.

It localises to the cytoplasm. The catalysed reaction is (R)-glycerate + ATP = (2R)-3-phosphoglycerate + ADP + H(+). The protein is Glycerate kinase (glyctk) of Danio rerio (Zebrafish).